The following is a 527-amino-acid chain: PTS system maltose-specific EIICB component (527 aa).

One can recognise a PTS EIIC type-1 domain in the interval 1–418; it reads MMQKIQRFGS…FNIATPGREK (418 aa). The next 12 membrane-spanning stretches (helical) occupy residues 8 to 28, 59 to 79, 93 to 113, 132 to 152, 173 to 193, 200 to 220, 224 to 244, 276 to 296, 305 to 325, 326 to 346, 357 to 377, and 382 to 402; these read FGSA…IVGI, GWTV…VALA, VYLT…GAFG, IKTL…VVFL, YIVM…SYIW, IGSL…IYTF, ILIP…GPAV, FALH…AFYV, LVAG…ITEP, IEFT…VLAA, VVGN…IPLF, and MTYV…FFVF. Positions 449–527 constitute a PTS EIIB type-1 domain; it reads DDTAFLYIEA…RERVEKILNQ (79 aa). Cysteine 471 (phosphocysteine intermediate; for EIIB activity) is an active-site residue.

The protein localises to the cell membrane. The enzyme catalyses D-maltose(out) + N(pros)-phospho-L-histidyl-[protein] = alpha-maltose 6'-phosphate(in) + L-histidyl-[protein]. Its function is as follows. The phosphoenolpyruvate-dependent sugar phosphotransferase system (sugar PTS), a major carbohydrate active transport system, catalyzes the phosphorylation of incoming sugar substrates concomitantly with their translocation across the cell membrane. This system is involved in maltose transport. The sequence is that of PTS system maltose-specific EIICB component from Bacillus subtilis (strain 168).